The sequence spans 439 residues: Na(+)/H(+) antiporter NhaA (439 aa).

Helical transmembrane passes span 12–32 (SMNI…AIIA), 67–87 (MIEF…GLEI), 103–123 (ALPF…YMSI), 133–153 (GLAI…SLLG), 162–182 (IFLT…IALF), 186–206 (HVSY…YFIG), 214–234 (IFFL…GIHS), 314–334 (ILPL…GELV), 341–361 (VAAG…WLAI), 379–399 (GIAL…NLSF), and 412–432 (FGVL…LRIV).

Belongs to the NhaA Na(+)/H(+) (TC 2.A.33) antiporter family.

The protein localises to the cell inner membrane. It carries out the reaction Na(+)(in) + 2 H(+)(out) = Na(+)(out) + 2 H(+)(in). Functionally, na(+)/H(+) antiporter that extrudes sodium in exchange for external protons. This chain is Na(+)/H(+) antiporter NhaA, found in Bacteroides thetaiotaomicron (strain ATCC 29148 / DSM 2079 / JCM 5827 / CCUG 10774 / NCTC 10582 / VPI-5482 / E50).